The sequence spans 589 residues: Transcription factor MYC4 (589 aa).

A JAZ-interaction domain region spans residues 99–150 (NTVLLGWGDGYYKGEEEKSRKKKSNPASAAEQEHRKRVIRELNSLISGGVGG). Disordered stretches follow at residues 114-133 (EEKSRKKKSNPASAAEQEHR), 291-326 (AAPVMNNGGNDSTSNSDSQPISKLCNGSSVENPNPK), 340-359 (IENGQEEDSSNKKRSPVSNN), and 381-422 (ASVA…EAER). Residues 296–308 (NNGGNDSTSNSDS) are compositionally biased toward low complexity. The segment covering 309–322 (QPISKLCNGSSVEN) has biased composition (polar residues). Positions 381–398 (ASVAKEAESNRVVVEPEK) are enriched in basic and acidic residues. The span at 399-408 (KPRKRGRKPA) shows a compositional bias: basic residues. Residues 409 to 422 (NGREEPLNHVEAER) show a composition bias toward basic and acidic residues. A bHLH domain is found at 412-461 (EEPLNHVEAERQRREKLNQRFYSLRAVVPNVSKMDKASLLGDAISYISEL).

Homo- and heterodimer. Interacts with MYB28, MYB29, MYB34, MYB51, MYB76, MYB122, MYC3, AFPH2/NINJA and the JAZ repressors TIFY10A/JAZ1, TIFY10B/JAZ2, TIFY6B/JAZ3, TIFY6A/JAZ4, TIFY11A/JAZ5, TIFY11B/JAZ6, TIFY5B/JAZ7, TIFY5A/JAZ8, TIFY7/JAZ9, TIFY9/JAZ10, TIFY3A/JAZ11 and TIFY3B/JAZ12. Expressed constitutively at low levels. Preferentially expressed in vascular tissues.

It localises to the nucleus. Its function is as follows. Transcription factor involved in jasmonic acid (JA) gene regulation. With MYC2 and MYC3, controls additively subsets of JA-dependent responses. Can form complexes with all known glucosinolate-related MYBs to regulate glucosinolate biosynthesis. Binds to the G-box (5'-CACGTG-3') of promoters. Activates multiple TIFY/JAZ promoters. In Arabidopsis thaliana (Mouse-ear cress), this protein is Transcription factor MYC4 (MYC4).